The following is a 375-amino-acid chain: G-protein coupled estrogen receptor 1 (375 aa).

Met-1 bears the N-acetylmethionine mark. Topologically, residues 1–62 (MDVTSQARGV…QQYVIGLFLS (62 aa)) are extracellular. N-linked (GlcNAc...) asparagine glycans are attached at residues Asn-25, Asn-32, and Asn-44. A helical membrane pass occupies residues 63–84 (CLYTIFLFPIGFVGNILILVVN). Residues 85-96 (ISFREKMTIPDL) are Cytoplasmic-facing. A helical membrane pass occupies residues 97-120 (YFINLAVADLILVADSLIEVFNLH). The Extracellular segment spans residues 121–132 (ERYYDIAVLCTF). Cysteines 130 and 207 form a disulfide. Residues 133–153 (MSLFLQVNMYSSVFFLTWMSF) traverse the membrane as a helical segment. Residues 154–175 (DRYIALARAMRCSLFRTKHHAR) lie on the Cytoplasmic side of the membrane. The chain crosses the membrane as a helical span at residues 176–194 (LSCGLIWMASVSATLVPFT). Over 195 to 220 (AVHLQHTDEACFCFADVREVQWLEVT) the chain is Extracellular. Residues 221–236 (LGFIVPFAIIGLCYSL) traverse the membrane as a helical segment. Topologically, residues 237-259 (IVRVLVRAHRHRGLRPRRQKALR) are cytoplasmic. The helical transmembrane segment at 260–280 (MILAVVLVFFVCWLPENVFIS) threads the bilayer. Topologically, residues 281–306 (VHLLQRTQPGAAPCKQSFRHAHPLTG) are extracellular. A helical membrane pass occupies residues 307–327 (HIVNLAAFSNSCLNPLIYSFL). Residues 328 to 375 (GETFRDKLRLYIEQKTNLPALNRFCHAALKAVIPDSTEQSDVRFSSAV) are Cytoplasmic-facing.

The protein belongs to the G-protein coupled receptor 1 family. In terms of assembly, homodimer. Heterodimer; heterodimerizes with other G-protein-coupled receptor (GPCRs) like CRHR1, HTR1A and PAQR8. Interacts (via C-terminus tail motif) with DLG4 (via N-terminus tandem pair of PDZ domains); the interaction is direct and induces the increase of GPER1 protein levels residing at the plasma membrane surface in a estradiol-independent manner. Interacts with RAMP3; the interaction confers proper subcellular localization and function in cardioprotection. Interacts with KRT7 and KRT8. Interacts with EGFR; the interaction increases after agonist-induced stimulation in cancer-associated fibroblasts (CAF). Interacts with EGFR and ESR1. Ubiquitinated; ubiquitination occurs at the plasma membrane and leads to proteasome-mediated degradation. Post-translationally, glycosylated. In terms of tissue distribution, expressed in placenta, endothelial and epithelial cells, non laboring and laboring term myometrium, fibroblasts and cancer-associated fibroblasts (CAF), prostate cancer cells and invasive adenocarcinoma (at protein level). Ubiquitously expressed, but is most abundant in placenta. In brain regions, expressed as a 2.8 kb transcript in basal forebrain, frontal cortex, thalamus, hippocampus, caudate and putamen.

Its subcellular location is the nucleus. The protein resides in the cytoplasm. It is found in the perinuclear region. It localises to the cytoskeleton. The protein localises to the cell membrane. Its subcellular location is the basolateral cell membrane. The protein resides in the cytoplasmic vesicle membrane. It is found in the early endosome. It localises to the recycling endosome. The protein localises to the golgi apparatus membrane. Its subcellular location is the golgi apparatus. The protein resides in the trans-Golgi network. It is found in the endoplasmic reticulum membrane. It localises to the cell projection. The protein localises to the dendrite. Its subcellular location is the dendritic spine membrane. The protein resides in the axon. It is found in the postsynaptic density. It localises to the mitochondrion membrane. Its function is as follows. G-protein coupled estrogen receptor that binds to 17-beta-estradiol (E2) with high affinity, leading to rapid and transient activation of numerous intracellular signaling pathways. Stimulates cAMP production, calcium mobilization and tyrosine kinase Src inducing the release of heparin-bound epidermal growth factor (HB-EGF) and subsequent transactivation of the epidermal growth factor receptor (EGFR), activating downstream signaling pathways such as PI3K/Akt and ERK/MAPK. Mediates pleiotropic functions among others in the cardiovascular, endocrine, reproductive, immune and central nervous systems. Has a role in cardioprotection by reducing cardiac hypertrophy and perivascular fibrosis in a RAMP3-dependent manner. Regulates arterial blood pressure by stimulating vasodilation and reducing vascular smooth muscle and microvascular endothelial cell proliferation. Plays a role in blood glucose homeostasis contributing to the insulin secretion response by pancreatic beta cells. Triggers mitochondrial apoptosis during pachytene spermatocyte differentiation. Stimulates uterine epithelial cell proliferation. Enhances uterine contractility in response to oxytocin. Contributes to thymic atrophy by inducing apoptosis. Attenuates TNF-mediated endothelial expression of leukocyte adhesion molecules. Promotes neuritogenesis in developing hippocampal neurons. Plays a role in acute neuroprotection against NMDA-induced excitotoxic neuronal death. Increases firing activity and intracellular calcium oscillations in luteinizing hormone-releasing hormone (LHRH) neurons. Inhibits early osteoblast proliferation at growth plate during skeletal development. Inhibits mature adipocyte differentiation and lipid accumulation. Involved in the recruitment of beta-arrestin 2 ARRB2 at the plasma membrane in epithelial cells. Also functions as a receptor for aldosterone mediating rapid regulation of vascular contractibility through the PI3K/ERK signaling pathway. Involved in cancer progression regulation. Stimulates cancer-associated fibroblast (CAF) proliferation by a rapid genomic response through the EGFR/ERK transduction pathway. Associated with EGFR, may act as a transcription factor activating growth regulatory genes (c-fos, cyclin D1). Promotes integrin alpha-5/beta-1 and fibronectin (FN) matrix assembly in breast cancer cells. The sequence is that of G-protein coupled estrogen receptor 1 from Homo sapiens (Human).